A 279-amino-acid polypeptide reads, in one-letter code: Phage-like element PBSX protein XepA (279 aa).

It to B.subtilis YqxG/YqdC.

Functionally, not known; does not seem to be involved in host cell lysis. The chain is Phage-like element PBSX protein XepA (xepA) from Bacillus subtilis (strain 168).